Here is a 73-residue protein sequence, read N- to C-terminus: Aldehyde dehydrogenase (73 aa).

The protein belongs to the aldehyde dehydrogenase family.

It catalyses the reaction an aldehyde + NAD(+) + H2O = a carboxylate + NADH + 2 H(+). It functions in the pathway alcohol metabolism; ethanol degradation; acetate from ethanol: step 2/2. The sequence is that of Aldehyde dehydrogenase from Geobacillus stearothermophilus (Bacillus stearothermophilus).